Here is a 732-residue protein sequence, read N- to C-terminus: Calcineurin-interacting protein 2 (732 aa).

6 disordered regions span residues 1-24 (MNRG…REPY), 115-169 (DYEP…ALPK), 181-232 (QKKD…LDDR), 310-351 (ILSR…TSRR), 372-397 (RSQS…STVS), and 426-708 (QTVT…PLEE). Over residues 8-17 (YNRSRSTSSR) the composition is skewed to polar residues. Over residues 117–129 (EPLRKEPELKEQK) the composition is skewed to basic and acidic residues. Polar residues-rich tracts occupy residues 151-163 (SGIT…SSRT) and 189-208 (IPRQ…NNEL). Positions 312–323 (SRSVSTSPSSVT) are enriched in low complexity. Polar residues predominate over residues 324 to 351 (DNIPKTSTSRIPSSENPKTMEHTTTSRR). Over residues 426–439 (QTVTNVRVPSSRGS) the composition is skewed to polar residues. Basic and acidic residues-rich tracts occupy residues 526–538 (QSPE…RFAD) and 546–557 (PGDHQAREEDLP). The span at 607–619 (SVTPSEKSLPRNS) shows a compositional bias: polar residues. Low complexity predominate over residues 688–705 (NSPNKSSSSSKARPSAAP).

As to quaternary structure, interacts with tax-6. Expressed in intestine.

The polypeptide is Calcineurin-interacting protein 2 (Caenorhabditis elegans).